We begin with the raw amino-acid sequence, 536 residues long: Bifunctional purine biosynthesis protein PurH (536 aa).

One can recognise an MGS-like domain in the interval 8-158 (IPAPDEVRIQ…KNHAYVTIVT (151 aa)).

It belongs to the PurH family.

The enzyme catalyses (6R)-10-formyltetrahydrofolate + 5-amino-1-(5-phospho-beta-D-ribosyl)imidazole-4-carboxamide = 5-formamido-1-(5-phospho-D-ribosyl)imidazole-4-carboxamide + (6S)-5,6,7,8-tetrahydrofolate. It catalyses the reaction IMP + H2O = 5-formamido-1-(5-phospho-D-ribosyl)imidazole-4-carboxamide. It functions in the pathway purine metabolism; IMP biosynthesis via de novo pathway; 5-formamido-1-(5-phospho-D-ribosyl)imidazole-4-carboxamide from 5-amino-1-(5-phospho-D-ribosyl)imidazole-4-carboxamide (10-formyl THF route): step 1/1. Its pathway is purine metabolism; IMP biosynthesis via de novo pathway; IMP from 5-formamido-1-(5-phospho-D-ribosyl)imidazole-4-carboxamide: step 1/1. This chain is Bifunctional purine biosynthesis protein PurH, found in Sinorhizobium fredii (strain NBRC 101917 / NGR234).